The sequence spans 100 residues: Urease subunit gamma (100 aa).

The protein belongs to the urease gamma subunit family. As to quaternary structure, heterotrimer of UreA (gamma), UreB (beta) and UreC (alpha) subunits. Three heterotrimers associate to form the active enzyme.

The protein resides in the cytoplasm. The catalysed reaction is urea + 2 H2O + H(+) = hydrogencarbonate + 2 NH4(+). It participates in nitrogen metabolism; urea degradation; CO(2) and NH(3) from urea (urease route): step 1/1. In Azoarcus sp. (strain BH72), this protein is Urease subunit gamma.